Here is a 147-residue protein sequence, read N- to C-terminus: Hemoglobin subunit beta (147 aa).

N-acetylvaline is present on Val2. Residues 3–147 enclose the Globin domain; sequence HLTGEEKAAV…VANALAHKYH (145 aa). Phosphothreonine is present on Thr13. Ser45 carries the post-translational modification Phosphoserine. Lys60 carries the N6-acetyllysine modification. His64 is a binding site for heme b. Lys83 carries the N6-acetyllysine modification. His93 provides a ligand contact to heme b. At Cys94 the chain carries S-nitrosocysteine. Lys145 bears the N6-acetyllysine mark.

It belongs to the globin family. As to quaternary structure, heterotetramer of two alpha chains and two beta chains. In terms of tissue distribution, red blood cells.

In terms of biological role, involved in oxygen transport from the lung to the various peripheral tissues. The protein is Hemoglobin subunit beta (HBB) of Ateles belzebuth (White-bellied spider monkey).